Consider the following 313-residue polypeptide: Ester hydrolase C11orf54 homolog (313 aa).

The Zn(2+) site is built by H264, H266, and H276.

As to quaternary structure, monomer. Zn(2+) is required as a cofactor.

The protein localises to the nucleus. It localises to the cytoplasm. In terms of biological role, exhibits ester hydrolase activity on the substrate p-nitrophenyl acetate, in vitro. May regulate DNA damage and repair by regulating HIF1A degradation via chaperone-mediated autophagy (CMA). This is Ester hydrolase C11orf54 homolog from Xenopus tropicalis (Western clawed frog).